Here is a 388-residue protein sequence, read N- to C-terminus: (S)-8-oxocitronellyl enol synthase ISY1 (388 aa).

Residues 35–37 (TGI), 63–64 (RR), 81–82 (DV), 105–106 (TW), and Gln-143 each bind NADP(+). Catalysis depends on residues Lys-147 and Tyr-178. NADP(+) contacts are provided by residues Tyr-178, Ile-205, and 212–214 (SMM).

It belongs to the short-chain dehydrogenases/reductases (SDR) family.

The catalysed reaction is (S)-8-oxocitronellyl enol + NADP(+) = (6E)-8-oxogeranial + NADPH + H(+). It catalyses the reaction (S)-8-oxocitronellyl enol + NAD(+) = (6E)-8-oxogeranial + NADH + H(+). Its function is as follows. Iridoid synthase that catalyzes the first step in generation of the iridoid ring scaffold using the linear monoterpene (6E)-8-oxogeranial as substrate. Iridoids comprise a large family of distinctive bicyclic monoterpenes that possess a wide range of pharmacological activities, including anticancer, anti-inflammatory, antifungal and antibacterial activities. Catalyzes the conversion of the linear monoterpene (6E)-8-oxogeranial to (S)-8-oxocitronellyl enol, a precursor of nepetalactones, which are metabolites that are both insect-repellent and have euphoric effect in cats. The chain is (S)-8-oxocitronellyl enol synthase ISY1 from Nepeta cataria (Catnip).